The sequence spans 514 residues: Inosine-5'-monophosphate dehydrogenase (514 aa).

CBS domains are found at residues 112-171 and 175-233; these read FISK…DTPV and MTRR…PHST. NAD(+) is bound by residues 270-272 and 320-322; these read DSS and GMG. Positions 322 and 324 each coordinate K(+). S325 lines the IMP pocket. C327 provides a ligand contact to K(+). Catalysis depends on C327, which acts as the Thioimidate intermediate. Residues 360-362, 383-384, and 407-411 contribute to the IMP site; these read DGG, GG, and YRGMG. R425 (proton acceptor) is an active-site residue. Q437 contacts IMP. K(+) contacts are provided by E496, G497, and G498. A Microbody targeting signal motif is present at residues 512-514; the sequence is AKM.

It belongs to the IMPDH/GMPR family. As to quaternary structure, heterotetramer. Interacts with glycosomal protein sorting receptor PEX5. The cofactor is K(+).

The protein resides in the glycosome. The enzyme catalyses IMP + NAD(+) + H2O = XMP + NADH + H(+). Its pathway is purine metabolism; XMP biosynthesis via de novo pathway; XMP from IMP: step 1/1. Its activity is regulated as follows. Mycophenolic acid (MPA) is a non-competitive inhibitor that prevents formation of the closed enzyme conformation by binding to the same site as the amobile flap. In contrast, mizoribine monophosphate (MZP) is a competitive inhibitor that induces the closed conformation. MPA is a potent inhibitor of mammalian IMPDHs but a poor inhibitor of the bacterial enzymes. MZP is a more potent inhibitor of bacterial IMPDH. Potently inhibited by MPA. Inhibited by XMP and GMP. Its function is as follows. Catalyzes the conversion of inosine 5'-phosphate (IMP) to xanthosine 5'-phosphate (XMP), the first committed and rate-limiting step in the de novo synthesis of guanine nucleotides, and therefore plays an important role in the regulation of cell growth. This is Inosine-5'-monophosphate dehydrogenase from Leishmania donovani.